Here is a 262-residue protein sequence, read N- to C-terminus: Deaminated glutathione amidase (262 aa).

In terms of domain architecture, CN hydrolase spans 1 to 238 (MLVAAGQFAV…PALIMAEVTP (238 aa)). Residue Glu40 is the Proton acceptor of the active site. Lys110 acts as the Proton donor in catalysis. Cys147 (nucleophile) is an active-site residue.

It belongs to the carbon-nitrogen hydrolase superfamily. NIT1/NIT2 family.

The catalysed reaction is N-(4-oxoglutaryl)-L-cysteinylglycine + H2O = L-cysteinylglycine + 2-oxoglutarate. Hydrolyzes deaminated glutathione (dGSH) to 2-oxoglutarate and L-cysteinylglycine, and no activity on glutathione or L-glutamine. May function as a metabolite repair enzyme. This Escherichia coli O157:H7 protein is Deaminated glutathione amidase (ybeM).